The sequence spans 453 residues: Armadillo repeat-containing X-linked protein 1 (453 aa).

Over 1–6 (MGRTRE) the chain is Mitochondrial intermembrane. Mitochondrion outer membrane (MOM)-targeting sequence stretches follow at residues 1-6 (MGRTRE) and 26-36 (RLAWGRDENEK). A helical; Signal-anchor membrane pass occupies residues 7–29 (AGCVAAGVVIGAGACYCVYRLAW). Residues 30–453 (GRDENEKIWD…VKVLKVLTKL (424 aa)) lie on the Cytoplasmic side of the membrane. Disordered regions lie at residues 58 to 77 (AKTNAGAGSGAKLQGDSEVK) and 132 to 182 (ISGN…RAPA). Residues 167–177 (GKSKGKARSKS) show a composition bias toward basic residues. ARM repeat units follow at residues 195–235 (PYKI…NNAA), 237–276 (SFNQNAIRELGGVPIIAKLIKTKDPIIREKTYNALNNLSV), 358–398 (PAMT…NIND), and 415–453 (SSLFFLFKESGVCVKKIKALANHNDLVVKVKVLKVLTKL).

It belongs to the eutherian X-chromosome-specific Armcx family. As to quaternary structure, interacts with MIRO1. In terms of tissue distribution, expressed at high levels ovary, heart, testis, prostate, brain, spleen and colon. Expressed at very low levels in liver and thymus. Not expressed in peripheral blood leukocytes. Not or reduced expressed in lung, prostate, colon, pancreas and ovarian carcinomas.

It localises to the mitochondrion. The protein resides in the mitochondrion outer membrane. Its function is as follows. Regulates mitochondrial transport during axon regeneration. Increases the proportion of motile mitochondria by recruiting stationary mitochondria into the motile pool. Enhances mitochondria movement and neurite growth in both adult axons and embryonic neurons. Promotes neuronal survival and axon regeneration after nerve injury. May link mitochondria to the Trak1-kinesin motor complex via its interaction with MIRO1. The polypeptide is Armadillo repeat-containing X-linked protein 1 (ARMCX1) (Homo sapiens (Human)).